Consider the following 469-residue polypeptide: Bile acid receptor (469 aa).

Residue Lys-119 forms a Glycyl lysine isopeptide (Lys-Gly) (interchain with G-Cter in SUMO1) linkage. Positions Asp-121 to Thr-196 form a DNA-binding region, nuclear receptor. Residues Cys-124–Cys-144 form an NR C4-type zinc finger. Residues Ser-132 and Ser-151 each carry the phosphoserine; by PKC/PRKCA modification. Position 154 is an N6-acetyllysine; by EP300 (Lys-154). The NR C4-type zinc finger occupies Cys-160–Cys-184. The residue at position 203 (Lys-203) is an N6-methyllysine; by SETD7. Lys-210 bears the N6-acetyllysine; by EP300 mark. In terms of domain architecture, NR LBD spans Asp-245–Gln-469. Residue Lys-272 forms a Glycyl lysine isopeptide (Lys-Gly) (interchain with G-Cter in SUMO1) linkage. Residue Arg-328 coordinates 3beta,7beta-dihydroxy-5beta-cholan-24-oate. 3 residues coordinate chenodeoxycholate: Arg-328, Tyr-358, and Tyr-366. Position 366 (Tyr-366) interacts with 3beta,7beta-dihydroxy-5beta-cholan-24-oate. Position 439 is a phosphothreonine; by PKC/PRKCZ (Thr-439). His-444 serves as a coordination point for chenodeoxycholate.

It belongs to the nuclear hormone receptor family. NR1 subfamily. In terms of assembly, heterodimer with RXRA; the heterodimerization enhances the binding affinity for LXXLL motifs from coactivators. Binds DNA predominantly as a heterodimer with RXRA. After activation by agonist binding interacts with coactivators. Interacts with NCOA1, NCOA2, PPARGC1A, CARM1, SETD7, PRMT1, GPS2, SMARCA4 and MED1, EP300 and SMARCD1. Interacts with XRCC5 and XRCC6; decreasing NR1H4/FXR transactivation activity towards ABCB11/BSEP. Interacts with PAGR1 AND NCOA6; indicative for an association with an MLL2/MLL3 complex (ASCOM). Acetylated by EP300. Lys-210 as is the major acetylation site for EP300; the dynamicly regulated acetylation inhibits heterodimerization with RXRA and transactivation activity. Deacetylated by SIRT1. Post-translationally, methylation may increase transactivation of target genes. In terms of processing, phosphorylation by PKC/PRKCA increases transactivation activity by promoting association with PPARGC1A. Sumoylated upon ligand binding.

It is found in the nucleus. Its function is as follows. Ligand-activated transcription factor. Receptor for bile acids (BAs) such as chenodeoxycholic acid (CDCA), lithocholic acid, deoxycholic acid (DCA) and allocholic acid (ACA). Plays a essential role in BA homeostasis through the regulation of genes involved in BA synthesis, conjugation and enterohepatic circulation. Also regulates lipid and glucose homeostasis and is involved innate immune response. The FXR-RXR heterodimer binds predominantly to farnesoid X receptor response elements (FXREs) containing two inverted repeats of the consensus sequence 5'-AGGTCA-3' in which the monomers are spaced by 1 nucleotide (IR-1) but also to tandem repeat DR1 sites with lower affinity, and can be activated by either FXR or RXR-specific ligands. It is proposed that monomeric nuclear receptors such as NR5A2/LRH-1 bound to coregulatory nuclear responsive element (NRE) halfsites located in close proximity to FXREs modulate transcriptional activity. In the liver activates transcription of the corepressor NR0B2 thereby indirectly inhibiting CYP7A1 and CYP8B1 (involved in BA synthesis) implicating at least in part histone demethylase KDM1A resulting in epigenomic repression, and SLC10A1/NTCP (involved in hepatic uptake of conjugated BAs). Activates transcription of the repressor MAFG (involved in regulation of BA synthesis). Activates transcription of SLC27A5/BACS and BAAT (involved in BA conjugation), ABCB11/BSEP (involved in bile salt export) by directly recruiting histone methyltransferase CARM1, and ABCC2/MRP2 (involved in secretion of conjugated BAs) and ABCB4 (involved in secretion of phosphatidylcholine in the small intestine). Activates transcription of SLC27A5/BACS and BAAT (involved in BA conjugation), ABCB11/BSEP (involved in bile salt export) by directly recruiting histone methyltransferase CARM1, and ABCC2/MRP2 (involved in secretion of conjugated BAs) and ABCB4 (involved in secretion of phosphatidylcholine in the small intestine). In the intestine activates FGF19 expression and secretion leading to hepatic CYP7A1 repression. The function also involves the coordinated induction of hepatic KLB/beta-klotho expression. Regulates transcription of liver UGT2B4 and SULT2A1 involved in BA detoxification; binding to the UGT2B4 promoter seems to imply a monomeric transactivation independent of RXRA. Modulates lipid homeostasis by activating liver NR0B2/SHP-mediated repression of SREBF1 (involved in de novo lipogenesis), expression of PLTP (involved in HDL formation), SCARB1 (involved in HDL hepatic uptake), APOE, APOC1, APOC4, PPARA (involved in beta-oxidation of fatty acids), VLDLR and SDC1 (involved in the hepatic uptake of LDL and IDL remnants), and inhibiting expression of MTTP (involved in VLDL assembly). Increases expression of APOC2 (promoting lipoprotein lipase activity implicated in triglyceride clearance). Transrepresses APOA1 involving a monomeric competition with NR2A1 for binding to a DR1 element. Also reduces triglyceride clearance by inhibiting expression of ANGPTL3 and APOC3 (both involved in inhibition of lipoprotein lipase). Involved in glucose homeostasis by modulating hepatic gluconeogenesis through activation of NR0B2/SHP-mediated repression of respective genes. Modulates glycogen synthesis (inducing phosphorylation of glycogen synthase kinase-3). Modulates glucose-stimulated insulin secretion and is involved in insulin resistance. Involved in intestinal innate immunity. Plays a role in protecting the distal small intestine against bacterial overgrowth and preservation of the epithelial barrier. Down-regulates inflammatory cytokine expression in several types of immune cells including macrophages and mononuclear cells. Mediates trans-repression of TLR4-induced cytokine expression; the function seems to require its sumoylation and prevents N-CoR nuclear receptor corepressor clearance from target genes such as IL1B and NOS2. Involved in the TLR9-mediated protective mechanism in intestinal inflammation. Plays an anti-inflammatory role in liver inflammation; proposed to inhibit pro-inflammatory (but not antiapoptotic) NF-kappa-B signaling. In Rattus norvegicus (Rat), this protein is Bile acid receptor (Nr1h4).